The sequence spans 1067 residues: Protein CLEC16A homolog (1067 aa).

One can recognise an FPL domain in the interval 50–199 (LRCIAEILIW…AVRTISLNVY (150 aa)). Residues 333–353 (SIVALFLLSLVFLVVSHAPLV) traverse the membrane as a helical segment. Residues 409–418 (SSSSYALSED) show a composition bias toward low complexity. Disordered stretches follow at residues 409–434 (SSSSYALSEDSGVESSSPATTELDSQ), 837–861 (ASSSGGSGNSSGSSSRSSHHRPMFS), 876–993 (SNSA…SRSH), and 1037–1067 (QSSEETSFIGSDGNEATGGSEGRRRGAIETV). Over residues 421–432 (VESSSPATTELD) the composition is skewed to polar residues. Polar residues predominate over residues 876–888 (SNSAGVSRTQMAP). Over residues 917-926 (RADHSDRERS) the composition is skewed to basic and acidic residues. Positions 927–947 (PSVSMGSHSSSQSRENSQPRS) are enriched in low complexity. Basic and acidic residues predominate over residues 951-974 (RSRESSPRMPRPRSEEIPLEDFQH). The span at 975 to 993 (SRNNSPHSRGNPSPASRSH) shows a compositional bias: polar residues. Basic and acidic residues predominate over residues 1057-1067 (EGRRRGAIETV).

This sequence belongs to the CLEC16A/gop-1 family. In terms of assembly, interacts with the class C Vps-HOPS complex components; Car, Dor and Vps16a.

It localises to the cytoplasmic vesicle. The protein localises to the autophagosome membrane. It is found in the late endosome membrane. Its subcellular location is the golgi apparatus membrane. Its function is as follows. Required for mitophagy, autophagy and endosome maturation, possibly by acting in multiple membrane trafficking pathways. Required for endosome trafficking and maturation. Functions with the class C Vps-HOPS complex member Vps16a to promote endosomal maturation into degradative late endosomes and lysosomes. In response to starvation, functions at an early stage of autophagy to promote autophagosome growth and efficient autophagy. Essential for the recruitment of lva-positive Golgi elements to autophagosomes. Likely to function by promoting membrane traffic from the Golgi complex to the developing autophagosomes. Also regulates synaptic growth at the neuromuscular junctions (NMJ) by down-regulating BMP signaling. This is Protein CLEC16A homolog from Drosophila melanogaster (Fruit fly).